The following is a 302-amino-acid chain: MRSSIHASRLRKMGQSIPASTGPMARSANRFLQNRAAIFGLVLLTPLLFAVLTYPLWLPYKPNDIDLMAMNSAPSWKHWFGTDGVGRDVFARTMEGGRISLLVAVSSVVLSTAIGFLIGAISALGGRWADAIAMRSVDLAMTLPPVIFLLVLASIIGSGIWSTVVVIALLSWPVLSRMIRARLLELREREFVMASRGMGAGLGHLLFRHGLPNSIDILVVYATLQVANAILLEAGLSFLGLGVPPPAASWGNMLNAARSTAVLEQFPWQWLFPGGALVLAVLAINFIGDGLRDAFDPRAELN.

Positions 1–22 are disordered; sequence MRSSIHASRLRKMGQSIPASTG. 6 helical membrane-spanning segments follow: residues 38–58, 101–121, 147–167, 200–222, 230–250, and 268–288; these read IFGL…PLWL, LLVA…IGAI, IFLL…VVVI, AGLG…VVYA, ILLE…AASW, and WQWL…NFIG. The region spanning 97–288 is the ABC transmembrane type-1 domain; the sequence is GRISLLVAVS…LAVLAINFIG (192 aa).

The protein belongs to the binding-protein-dependent transport system permease family. As to quaternary structure, the complex is composed of two ATP-binding proteins (BRA0404 and BRA0405), two transmembrane proteins (BRA0407 and BRA0408) and a solute-binding protein (BRA0409).

Its subcellular location is the cell inner membrane. Probably part of an ABC transporter complex that could be involved in peptide import. Probably responsible for the translocation of the substrate across the membrane. This chain is Putative peptide permease protein BRA0407/BS1330_II0404, found in Brucella suis biovar 1 (strain 1330).